The primary structure comprises 126 residues: Small ribosomal subunit protein uS13 (126 aa).

The disordered stretch occupies residues 92-126; the sequence is HRRGLPVRGQRTKTNARTRKGPKKTVAGKKKATRK.

Belongs to the universal ribosomal protein uS13 family. In terms of assembly, part of the 30S ribosomal subunit. Forms a loose heterodimer with protein S19. Forms two bridges to the 50S subunit in the 70S ribosome.

In terms of biological role, located at the top of the head of the 30S subunit, it contacts several helices of the 16S rRNA. In the 70S ribosome it contacts the 23S rRNA (bridge B1a) and protein L5 of the 50S subunit (bridge B1b), connecting the 2 subunits; these bridges are implicated in subunit movement. Contacts the tRNAs in the A and P-sites. This Deinococcus deserti (strain DSM 17065 / CIP 109153 / LMG 22923 / VCD115) protein is Small ribosomal subunit protein uS13.